The primary structure comprises 110 residues: Putative zinc finger protein ORF110 (110 aa).

The segment at 3–26 (YVCTACKLKFHTFEEFKIHVHLFH) adopts a C2H2-type zinc-finger fold.

The chain is Putative zinc finger protein ORF110 from Acidianus filamentous virus 1 (isolate United States/Yellowstone) (AFV-1).